Consider the following 367-residue polypeptide: Phosphoribosylaminoimidazole-succinocarboxamide synthase (367 aa).

Belongs to the SAICAR synthetase family.

It catalyses the reaction 5-amino-1-(5-phospho-D-ribosyl)imidazole-4-carboxylate + L-aspartate + ATP = (2S)-2-[5-amino-1-(5-phospho-beta-D-ribosyl)imidazole-4-carboxamido]succinate + ADP + phosphate + 2 H(+). The protein operates within purine metabolism; IMP biosynthesis via de novo pathway; 5-amino-1-(5-phospho-D-ribosyl)imidazole-4-carboxamide from 5-amino-1-(5-phospho-D-ribosyl)imidazole-4-carboxylate: step 1/2. The sequence is that of Phosphoribosylaminoimidazole-succinocarboxamide synthase from Shewanella frigidimarina (strain NCIMB 400).